The primary structure comprises 663 residues: Transketolase 2 (663 aa).

Position 25 (histidine 25) interacts with substrate. Thiamine diphosphate contacts are provided by residues histidine 65 and 113–115 (GPL). A Mg(2+)-binding site is contributed by aspartate 154. The thiamine diphosphate site is built by glycine 155 and asparagine 184. Positions 184 and 186 each coordinate Mg(2+). Substrate-binding residues include histidine 259, arginine 356, and serine 383. Residue histidine 259 participates in thiamine diphosphate binding. Catalysis depends on glutamate 410, which acts as the Proton donor. Thiamine diphosphate is bound at residue phenylalanine 436. Substrate contacts are provided by histidine 460, aspartate 468, and arginine 519.

It belongs to the transketolase family. In terms of assembly, homodimer. The cofactor is Mg(2+). It depends on Ca(2+) as a cofactor. Mn(2+) serves as cofactor. Requires Co(2+) as cofactor. Thiamine diphosphate is required as a cofactor.

It catalyses the reaction D-sedoheptulose 7-phosphate + D-glyceraldehyde 3-phosphate = aldehydo-D-ribose 5-phosphate + D-xylulose 5-phosphate. Its function is as follows. Catalyzes the transfer of a two-carbon ketol group from a ketose donor to an aldose acceptor, via a covalent intermediate with the cofactor thiamine pyrophosphate. In Vibrio vulnificus (strain CMCP6), this protein is Transketolase 2 (tkt2).